Reading from the N-terminus, the 962-residue chain is Protein kinase ORF73 (962 aa).

2 disordered regions span residues 1-28 (MADRTPKRSADGLIHDAKPSKVTKNDRP) and 62-152 (STPA…RATT). The segment covering 81 to 90 (DSDDDDEEDN) has biased composition (acidic residues). Positions 143-152 (YDTTGRRATT) are enriched in polar residues. Positions 301–595 (LRAAPVLGKG…ASDLLKSPRY (295 aa)) constitute a Protein kinase domain. ATP contacts are provided by residues 307–315 (LGKGYFGTV) and Lys-324. The Proton acceptor role is filled by Asp-434.

It belongs to the protein kinase superfamily. Ser/Thr protein kinase family.

It catalyses the reaction L-seryl-[protein] + ATP = O-phospho-L-seryl-[protein] + ADP + H(+). The catalysed reaction is L-threonyl-[protein] + ATP = O-phospho-L-threonyl-[protein] + ADP + H(+). In Ictaluridae (bullhead catfishes), this protein is Protein kinase ORF73 (ORF73).